The following is a 200-amino-acid chain: Cysteine dioxygenase type 1 (200 aa).

Residues His-86, His-88, and His-140 each contribute to the Fe cation site. A cross-link (3'-(S-cysteinyl)-tyrosine (Cys-Tyr)) is located at residues 93–157 (CFLKMLQGNL…TEPAVSLHLY (65 aa)).

This sequence belongs to the cysteine dioxygenase family. As to quaternary structure, monomer. Fe(2+) is required as a cofactor. The cofactor is Ni(2+). Requires Zn(2+) as cofactor. In terms of processing, the thioether cross-link between Cys-93 and Tyr-157 plays a structural role through stabilizing the Fe(2+) ion, and prevents the production of highly damaging free hydroxyl radicals by holding the oxygen radical via hydroxyl hydrogen. In terms of tissue distribution, highly expressed in liver and placenta. Low expression in heart, brain and pancreas. Also detected in hepatoblastoma Hep-G2 cells.

The catalysed reaction is L-cysteine + O2 = 3-sulfino-L-alanine + H(+). The protein operates within organosulfur biosynthesis; taurine biosynthesis; hypotaurine from L-cysteine: step 1/2. Catalyzes the oxidation of cysteine to cysteine sulfinic acid with addition of molecular dioxygen. The chain is Cysteine dioxygenase type 1 (CDO1) from Homo sapiens (Human).